A 354-amino-acid polypeptide reads, in one-letter code: Mycothiol acetyltransferase (354 aa).

A compositionally biased stretch (polar residues) spans 1 to 18 (MMVDNQTPDSSTLSTAST). A disordered region spans residues 1–21 (MMVDNQTPDSSTLSTASTPVY). N-acetyltransferase domains follow at residues 21–176 (YAEP…QTRE) and 191–354 (LRMR…EPAA). Glutamate 52 provides a ligand contact to 1D-myo-inositol 2-(L-cysteinylamino)-2-deoxy-alpha-D-glucopyranoside. 101–103 (AAV) lines the acetyl-CoA pocket. 3 residues coordinate 1D-myo-inositol 2-(L-cysteinylamino)-2-deoxy-alpha-D-glucopyranoside: glutamate 217, lysine 259, and glutamate 274. Residues 278–280 (VGV) and 285–291 (QGGGLGR) each bind acetyl-CoA. Tyrosine 318 serves as a coordination point for 1D-myo-inositol 2-(L-cysteinylamino)-2-deoxy-alpha-D-glucopyranoside.

This sequence belongs to the acetyltransferase family. MshD subfamily. Monomer.

The enzyme catalyses 1D-myo-inositol 2-(L-cysteinylamino)-2-deoxy-alpha-D-glucopyranoside + acetyl-CoA = mycothiol + CoA + H(+). Its function is as follows. Catalyzes the transfer of acetyl from acetyl-CoA to desacetylmycothiol (Cys-GlcN-Ins) to form mycothiol. This Rothia mucilaginosa (strain DY-18) (Stomatococcus mucilaginosus) protein is Mycothiol acetyltransferase.